A 326-amino-acid polypeptide reads, in one-letter code: MNFGLFFLNFQPEGMTSEMVLDNMVDTVALVDKDDYHFKRVLVSEHHFSKNGIIGEPLTAISFLLGLTKRIEIGSLNQVITTHHPVRIGEQTGLLDQMSYGRFVLGLSDCVNDFEMDFFKRKRSSQQQQFEACYEILNEALTTNYCQADDDFFNFPRISVNPHCISEVKQYILASSMGVVEWAARKGLPLTYRWSDSLAEKEKYYQRYLAVAKENNIDVSNIDHQFPLLVNINENRRIARDEVREYIQSYVSEAYPTDPNIELRVEELIEQHAVGKVDEYYDSTMHAVKVTGSKNLLLSFESMKNKDDVTKLINMFNQKIKDNLIK.

It belongs to the bacterial luciferase oxidoreductase family. Heterodimer of an alpha and a beta chain.

The enzyme catalyses a long-chain fatty aldehyde + FMNH2 + O2 = a long-chain fatty acid + hnu + FMN + H2O + 2 H(+). In terms of biological role, light-emitting reaction in luminous bacteria. The specific role of the beta subunit is unknown, but it is absolutely required for bioluminescence activity. This chain is Alkanal monooxygenase beta chain (luxB), found in Photobacterium leiognathi.